The primary structure comprises 734 residues: Cell surface glycoprotein gp138B (734 aa).

A signal peptide spans 1–20 (MKIILTLSIFLICFLQLGQS). N-linked (GlcNAc...) asparagine glycosylation is found at Asn-58, Asn-89, Asn-124, Asn-198, Asn-224, Asn-392, Asn-420, Asn-435, Asn-482, Asn-498, Asn-523, Asn-596, Asn-605, Asn-614, Asn-621, and Asn-630. Residues 504–592 (PFIKSYGFLE…SSNEVTFYYF (89 aa)) enclose the IPT/TIG domain. Residues 678-712 (GETPTPSTTPSTTPSTTPSTTPSSTPTQSPGDDGS) are disordered. A compositionally biased stretch (low complexity) spans 680 to 712 (TPTPSTTPSTTPSTTPSTTPSSTPTQSPGDDGS). 4 consecutive repeat copies span residues 683-686 (PSTT), 687-690 (PSTT), 691-694 (PSTT), and 695-698 (PSTT). A 4 X 4 AA tandem repeats of P-S-T-T region spans residues 683–698 (PSTTPSTTPSTTPSTT). Gly-708 is lipidated: GPI-like-anchor amidated glycine. Residues 709–734 (DDGSTSSTLSISFYLITLLLLTQQFI) constitute a propeptide, removed in mature form.

Post-translationally, the sugar chains may play important roles in cell fusion. In terms of processing, the GPI-like-anchor contains a phosphoceramide group, rather than a phosphatidyl group.

It localises to the cell membrane. Involved in the sexual cell fusion of D.discoideum. In Dictyostelium discoideum (Social amoeba), this protein is Cell surface glycoprotein gp138B (GP138B).